A 277-amino-acid polypeptide reads, in one-letter code: Bleomycin hydrolase (277 aa).

The active site involves C53.

This sequence belongs to the peptidase C1 family. Homohexamer. Interacts with NUDT12 (via ANK repeats).

Its subcellular location is the cytoplasm. The protein resides in the cytoplasmic granule. It carries out the reaction Inactivates bleomycin B2 (a cytotoxic glycometallopeptide) by hydrolysis of a carboxyamide bond of beta-aminoalanine, but also shows general aminopeptidase activity. The specificity varies somewhat with source, but amino acid arylamides of Met, Leu and Ala are preferred.. Strongly inhibited by leupeptin, puromycin, NEM, and divalent cations. Its function is as follows. The normal physiological role of BLM hydrolase is unknown, but it catalyzes the inactivation of the antitumor drug BLM (a glycopeptide) by hydrolyzing the carboxamide bond of its B-aminoalaninamide moiety thus protecting normal and malignant cells from BLM toxicity. The sequence is that of Bleomycin hydrolase (BLMH) from Oryctolagus cuniculus (Rabbit).